A 417-amino-acid polypeptide reads, in one-letter code: Serine/threonine-protein phosphatase 4 regulatory subunit 2 (417 aa).

Composition is skewed to polar residues over residues 140–149 (EKNNSNSLNR), 158–170 (NSPSYTERSNING), and 186–196 (APMTTNGLPES). A disordered region spans residues 140–417 (EKNNSNSLNR…EVTDEPMEQD (278 aa)). Serine 159 bears the Phosphoserine mark. Over residues 197–213 (TDSKEANLQQNEEKNHS) the composition is skewed to basic and acidic residues. Low complexity predominate over residues 214–226 (DSSTSESEVSSVS). Serine 226 is subject to Phosphoserine. The span at 231–258 (KHPDEDAVEAEGHEVKRLRFDKEGEVRE) shows a compositional bias: basic and acidic residues. The span at 259–269 (TASQTTSSEIS) shows a compositional bias: polar residues. Basic and acidic residues predominate over residues 283–297 (QDKDKDSRCTRQHCT). Residues 298–311 (EEDEEEDEEEEEES) are compositionally biased toward acidic residues. Residues 318 to 327 (MIPERKNQEK) show a composition bias toward basic and acidic residues. Over residues 338 to 350 (ETSEENNQMEESD) the composition is skewed to acidic residues. Residues 353–363 (QAEKDLLHSEG) show a composition bias toward basic and acidic residues. Low complexity predominate over residues 366–375 (NEGPVSSSSS). Polar residues predominate over residues 385–399 (GSNSSKTGEILSESS). The segment covering 400–417 (MENDDEATEVTDEPMEQD) has biased composition (acidic residues).

Belongs to the PPP4R2 family. In terms of assembly, serine/threonine-protein phosphatase 4 (PP4) occurs in different assemblies of the catalytic and one or more regulatory subunits. Component of the PP4 complexes PPP4C-PPP4R2, PPP4C-PPP4R2-PPP4R3A and PPP4C-PPP4R2-PPP4R3B. The PPP4C-PPP4R2 complex appears to be a tetramer composed of 2 molecules of PPP4C and 2 molecules of PPP4R2. Interacts with DDX20/GEMIN3 and GEMIN4. Interacts with RPA2; this DNA damage-dependent interaction recruits PPP4C leading to RPA2 dephosphorylation. Widely expressed.

It is found in the cytoplasm. It localises to the cytoskeleton. Its subcellular location is the microtubule organizing center. The protein localises to the centrosome. The protein resides in the nucleus. In terms of biological role, regulatory subunit of serine/threonine-protein phosphatase 4 (PP4). May regulate the activity of PPP4C at centrosomal microtubule organizing centers. Its interaction with the SMN complex leads to enhance the temporal localization of snRNPs, suggesting a role of PPP4C in maturation of spliceosomal snRNPs. The PPP4C-PPP4R2-PPP4R3A PP4 complex specifically dephosphorylates H2AX phosphorylated on 'Ser-140' (gamma-H2AX) generated during DNA replication and required for DNA double strand break repair. Mediates RPA2 dephosphorylation by recruiting PPP4C to RPA2 in a DNA damage-dependent manner. RPA2 dephosphorylation is required for the efficient RPA2-mediated recruitment of RAD51 to chromatin following double strand breaks, an essential step for DNA repair. In Homo sapiens (Human), this protein is Serine/threonine-protein phosphatase 4 regulatory subunit 2 (PPP4R2).